The following is a 283-amino-acid chain: Flagellar filament 35 kDa core protein (283 aa).

It belongs to the bacterial flagellin family. The flagellum consists of two outer layers around a core that contains several antigenically related polypeptides.

The protein resides in the periplasmic flagellum. It is found in the periplasm. In terms of biological role, component of the core of the flagella. This is Flagellar filament 35 kDa core protein (flaB) from Leptospira interrogans serogroup Icterohaemorrhagiae serovar copenhageni (strain Fiocruz L1-130).